The chain runs to 132 residues: Small ribosomal subunit protein uS11 (132 aa).

Over residues Met1 to Arg16 the composition is skewed to basic residues. Residues Met1–Glu20 form a disordered region.

This sequence belongs to the universal ribosomal protein uS11 family. Part of the 30S ribosomal subunit. Interacts with proteins S7 and S18. Binds to IF-3.

Functionally, located on the platform of the 30S subunit, it bridges several disparate RNA helices of the 16S rRNA. Forms part of the Shine-Dalgarno cleft in the 70S ribosome. The protein is Small ribosomal subunit protein uS11 of Clostridium botulinum (strain Hall / ATCC 3502 / NCTC 13319 / Type A).